A 207-amino-acid polypeptide reads, in one-letter code: LexA repressor (207 aa).

Positions valine 28–alanine 48 form a DNA-binding region, H-T-H motif. Residues serine 129 and lysine 167 each act as for autocatalytic cleavage activity in the active site.

It belongs to the peptidase S24 family. As to quaternary structure, homodimer.

The enzyme catalyses Hydrolysis of Ala-|-Gly bond in repressor LexA.. Represses a number of genes involved in the response to DNA damage (SOS response), including recA and lexA. In the presence of single-stranded DNA, RecA interacts with LexA causing an autocatalytic cleavage which disrupts the DNA-binding part of LexA, leading to derepression of the SOS regulon and eventually DNA repair. This Geobacillus kaustophilus (strain HTA426) protein is LexA repressor.